Consider the following 147-residue polypeptide: Hemoglobin subunit epsilon (147 aa).

The Globin domain occupies 3–147 (HWSAEEKQLI…VAHALPRKYH (145 aa)). The heme b site is built by H64 and H93.

Belongs to the globin family. In terms of assembly, heterotetramer of two epsilon chains and two alpha chains. Red blood cells.

In terms of biological role, beta-type chain found in early embryos. The protein is Hemoglobin subunit epsilon (HBE) of Cairina moschata (Muscovy duck).